Reading from the N-terminus, the 756-residue chain is Hormone-sensitive lipase (756 aa).

The Involved in the stabilization of the negatively charged intermediate by the formation of the oxyanion hole motif lies at 350–352 (HGG). Serine 424 is a catalytic residue. Disordered stretches follow at residues 542–570 (SVSK…TDSL) and 581–600 (RNSS…ETLG). A Phosphoserine; by PKA modification is found at serine 552. Residue serine 554 is modified to Phosphoserine; by AMPK. The span at 581–596 (RNSSDTTDTPELSLSA) shows a compositional bias: polar residues. Phosphoserine is present on residues serine 595 and serine 649. Residues aspartate 692 and histidine 722 contribute to the active site.

This sequence belongs to the 'GDXG' lipolytic enzyme family. Monomer and homodimer. Interacts with CAVIN1 in the adipocyte cytoplasm. Interacts with PLIN5. Phosphorylation by AMPK reduces its translocation towards the lipid droplets.

The protein resides in the cell membrane. The protein localises to the membrane. Its subcellular location is the caveola. It is found in the cytoplasm. It localises to the cytosol. The protein resides in the lipid droplet. The catalysed reaction is a diacylglycerol + H2O = a monoacylglycerol + a fatty acid + H(+). The enzyme catalyses a triacylglycerol + H2O = a diacylglycerol + a fatty acid + H(+). It catalyses the reaction a monoacylglycerol + H2O = glycerol + a fatty acid + H(+). It carries out the reaction Hydrolyzes glycerol monoesters of long-chain fatty acids.. The catalysed reaction is 1,2-di-(9Z-octadecenoyl)-glycerol + (9Z)-octadecenoate + H(+) = 1,2,3-tri-(9Z-octadecenoyl)-glycerol + H2O. The enzyme catalyses 2,3-di-(9Z)-octadecenoyl-sn-glycerol + H2O = 2-(9Z-octadecenoyl)-glycerol + (9Z)-octadecenoate + H(+). It catalyses the reaction cholesteryl (9Z-octadecenoate) + H2O = cholesterol + (9Z)-octadecenoate + H(+). It carries out the reaction 1,2,3-tri-(9Z-octadecenoyl)-glycerol + H2O = di-(9Z)-octadecenoylglycerol + (9Z)-octadecenoate + H(+). The catalysed reaction is all-trans-retinyl hexadecanoate + H2O = all-trans-retinol + hexadecanoate + H(+). The enzyme catalyses 1,2-di-(9Z-octadecenoyl)-glycerol + H2O = (9Z-octadecenoyl)-glycerol + (9Z)-octadecenoate + H(+). It catalyses the reaction 2-(5Z,8Z,11Z,14Z-eicosatetraenoyl)-glycerol + H2O = glycerol + (5Z,8Z,11Z,14Z)-eicosatetraenoate + H(+). It carries out the reaction 1-(9Z-octadecenoyl)-glycerol + H2O = glycerol + (9Z)-octadecenoate + H(+). The catalysed reaction is 2-(9Z-octadecenoyl)-glycerol + H2O = glycerol + (9Z)-octadecenoate + H(+). The enzyme catalyses 1-O-hexadecyl-2-acetyl-sn-glycerol + H2O = 1-O-hexadecyl-sn-glycerol + acetate + H(+). It catalyses the reaction 1,2-di-(9Z-octadecenoyl)-sn-glycerol + H2O = (9Z-octadecenoyl)-glycerol + (9Z)-octadecenoate + H(+). It carries out the reaction 1,3-di-(9Z-octadecenoyl)-glycerol + H2O = 1-(9Z-octadecenoyl)-glycerol + (9Z)-octadecenoate + H(+). The catalysed reaction is 1,2-di-(9Z-octadecenoyl)-glycerol + H2O = 2-(9Z-octadecenoyl)-glycerol + (9Z)-octadecenoate + H(+). The protein operates within glycerolipid metabolism; triacylglycerol degradation. In terms of biological role, lipase with broad substrate specificity, catalyzing the hydrolysis of triacylglycerols (TAGs), diacylglycerols (DAGs), monoacylglycerols (MAGs), cholesteryl esters and retinyl esters. Shows a preferential hydrolysis of DAGs over TAGs and MAGs. Preferentially hydrolyzes fatty acid (FA) esters at the sn-3 position of the glycerol backbone in DAGs and FA esters at the sn-1 and sn-2 positions of the glycerol backbone in TAGs. Catalyzes the hydrolysis of 2-arachidonoylglycerol, an endocannabinoid and of 2-acetyl monoalkylglycerol ether, the penultimate precursor of the pathway for de novo synthesis of platelet-activating factor. In adipose tissue and heart, it primarily hydrolyzes stored triglycerides to free fatty acids, while in steroidogenic tissues, it principally converts cholesteryl esters to free cholesterol for steroid hormone production. The polypeptide is Hormone-sensitive lipase (LIPE) (Bos taurus (Bovine)).